We begin with the raw amino-acid sequence, 230 residues long: MKIGIIGAMEPEVAHLIQSLTSAEHSLIAGIEFISGQIAGKDVVITRSGIGKVAASIATTLLIEKFAVTQVVNTGSAGGFVDSLKIGDIVISSEVRHHDVDVTAFGYEIGQMAQQPAAFIPDAALVEAAKKAVSALGEVKAIEGLICTGDSFICDPERTKVMRANFPTMAACEMEGAAIAQVCHQFKVPFVVIRSLSDNANNDSPVDFDSYIIKAGHHSAMMVVALLTEL.

The active-site Proton acceptor is E12. Substrate-binding positions include G78, I153, and 174–175 (ME). D198 acts as the Proton donor in catalysis.

Belongs to the PNP/UDP phosphorylase family. MtnN subfamily.

It catalyses the reaction S-adenosyl-L-homocysteine + H2O = S-(5-deoxy-D-ribos-5-yl)-L-homocysteine + adenine. The catalysed reaction is S-methyl-5'-thioadenosine + H2O = 5-(methylsulfanyl)-D-ribose + adenine. The enzyme catalyses 5'-deoxyadenosine + H2O = 5-deoxy-D-ribose + adenine. Its pathway is amino-acid biosynthesis; L-methionine biosynthesis via salvage pathway; S-methyl-5-thio-alpha-D-ribose 1-phosphate from S-methyl-5'-thioadenosine (hydrolase route): step 1/2. Its function is as follows. Catalyzes the irreversible cleavage of the glycosidic bond in both 5'-methylthioadenosine (MTA) and S-adenosylhomocysteine (SAH/AdoHcy) to adenine and the corresponding thioribose, 5'-methylthioribose and S-ribosylhomocysteine, respectively. Also cleaves 5'-deoxyadenosine, a toxic by-product of radical S-adenosylmethionine (SAM) enzymes, into 5-deoxyribose and adenine. In Shewanella denitrificans (strain OS217 / ATCC BAA-1090 / DSM 15013), this protein is 5'-methylthioadenosine/S-adenosylhomocysteine nucleosidase.